We begin with the raw amino-acid sequence, 114 residues long: uncharacterized protein (114 aa).

It to E.coli YfiI and P.aeruginosa RluD.

This is an uncharacterized protein from Escherichia coli O6:H1 (strain CFT073 / ATCC 700928 / UPEC).